We begin with the raw amino-acid sequence, 694 residues long: Elongation factor G (694 aa).

In terms of domain architecture, tr-type G spans 6-288 (KLYRNIGIAA…GVIEYLPSPT (283 aa)). GTP-binding positions include 15 to 22 (AHVDAGKT), 86 to 90 (DTPGH), and 140 to 143 (NKMD).

The protein belongs to the TRAFAC class translation factor GTPase superfamily. Classic translation factor GTPase family. EF-G/EF-2 subfamily.

The protein resides in the cytoplasm. Its function is as follows. Catalyzes the GTP-dependent ribosomal translocation step during translation elongation. During this step, the ribosome changes from the pre-translocational (PRE) to the post-translocational (POST) state as the newly formed A-site-bound peptidyl-tRNA and P-site-bound deacylated tRNA move to the P and E sites, respectively. Catalyzes the coordinated movement of the two tRNA molecules, the mRNA and conformational changes in the ribosome. This chain is Elongation factor G, found in Legionella pneumophila (strain Paris).